The sequence spans 274 residues: Dermonecrotic toxin SdSicTox-betaIIB1bi (274 aa).

The active site involves histidine 5. Positions 25 and 27 each coordinate Mg(2+). Histidine 41 functions as the Nucleophile in the catalytic mechanism. 2 disulfide bridges follow: cysteine 45–cysteine 51 and cysteine 47–cysteine 190. Aspartate 85 is a binding site for Mg(2+).

Belongs to the arthropod phospholipase D family. Class II subfamily. The cofactor is Mg(2+). Expressed by the venom gland.

The protein resides in the secreted. It catalyses the reaction an N-(acyl)-sphingosylphosphocholine = an N-(acyl)-sphingosyl-1,3-cyclic phosphate + choline. The enzyme catalyses an N-(acyl)-sphingosylphosphoethanolamine = an N-(acyl)-sphingosyl-1,3-cyclic phosphate + ethanolamine. It carries out the reaction a 1-acyl-sn-glycero-3-phosphocholine = a 1-acyl-sn-glycero-2,3-cyclic phosphate + choline. The catalysed reaction is a 1-acyl-sn-glycero-3-phosphoethanolamine = a 1-acyl-sn-glycero-2,3-cyclic phosphate + ethanolamine. Dermonecrotic toxins cleave the phosphodiester linkage between the phosphate and headgroup of certain phospholipids (sphingolipid and lysolipid substrates), forming an alcohol (often choline) and a cyclic phosphate. This toxin acts on sphingomyelin (SM). It may also act on ceramide phosphoethanolamine (CPE), lysophosphatidylcholine (LPC) and lysophosphatidylethanolamine (LPE), but not on lysophosphatidylserine (LPS), and lysophosphatidylglycerol (LPG). It acts by transphosphatidylation, releasing exclusively cyclic phosphate products as second products. Induces dermonecrosis, hemolysis, increased vascular permeability, edema, inflammatory response, and platelet aggregation. This Sicarius cf. damarensis (strain GJB-2008) (Six-eyed sand spider) protein is Dermonecrotic toxin SdSicTox-betaIIB1bi.